A 612-amino-acid chain; its full sequence is Sulfite reductase [NADPH] hemoprotein beta-component (612 aa).

Residues 1 to 26 form a disordered region; sequence MDDHKPIETPDGPAVDTPGIGARRYE. Residues Cys469, Cys475, Cys514, and Cys518 each contribute to the [4Fe-4S] cluster site. Cys518 serves as a coordination point for siroheme.

The protein belongs to the nitrite and sulfite reductase 4Fe-4S domain family. As to quaternary structure, alpha(8)-beta(8). The alpha component is a flavoprotein, the beta component is a hemoprotein. Siroheme is required as a cofactor. Requires [4Fe-4S] cluster as cofactor.

It carries out the reaction hydrogen sulfide + 3 NADP(+) + 3 H2O = sulfite + 3 NADPH + 4 H(+). Its pathway is sulfur metabolism; hydrogen sulfide biosynthesis; hydrogen sulfide from sulfite (NADPH route): step 1/1. In terms of biological role, component of the sulfite reductase complex that catalyzes the 6-electron reduction of sulfite to sulfide. This is one of several activities required for the biosynthesis of L-cysteine from sulfate. The sequence is that of Sulfite reductase [NADPH] hemoprotein beta-component from Methylorubrum extorquens (strain PA1) (Methylobacterium extorquens).